Consider the following 373-residue polypeptide: GDP-mannose 4,6-dehydratase (373 aa).

Residues 10–15 (GITGQD), 65–66 (DL), 87–91 (LGAQS), and tyrosine 102 each bind NADP(+). Residue threonine 134 is part of the active site. Residues glutamate 136 and tyrosine 158 each act as nucleophile in the active site. Lysine 162, histidine 188, and arginine 193 together coordinate NADP(+).

This sequence belongs to the NAD(P)-dependent epimerase/dehydratase family. GDP-mannose 4,6-dehydratase subfamily. NADP(+) is required as a cofactor.

The enzyme catalyses GDP-alpha-D-mannose = GDP-4-dehydro-alpha-D-rhamnose + H2O. Functionally, catalyzes the conversion of GDP-D-mannose to GDP-4-dehydro-6-deoxy-D-mannose. In Vibrio cholerae serotype O1 (strain ATCC 39315 / El Tor Inaba N16961), this protein is GDP-mannose 4,6-dehydratase.